The chain runs to 436 residues: Voltage-gated potassium channel regulatory subunit KCNG3 (436 aa).

Over 1–168 the chain is Cytoplasmic; sequence MTFGRSGAAS…RTFEEPTSSL (168 aa). A helical transmembrane segment spans residues 169–190; the sequence is AAQILASVSVVFVIVSMVVLCA. The Extracellular portion of the chain corresponds to 191–220; it reads STLPDWRNAAADNRSLDDRSRYSAGPGREP. The helical transmembrane segment at 221 to 242 threads the bilayer; it reads SGIIEAICIGWFTAECIVRFIV. Residues 243 to 253 are Cytoplasmic-facing; sequence SKNKCEFVKRP. A helical transmembrane segment spans residues 254-274; it reads LNIIDLLAITPYYISVLMTVF. At 275-284 the chain is on the extracellular side; the sequence is TGENSQLQRA. Residues 285–305 traverse the membrane as a helical; Voltage-sensor segment; that stretch reads GVTLRVLRMMRIFWVIKLARH. The Cytoplasmic portion of the chain corresponds to 306–320; the sequence is FIGLQTLGLTLKRCY. Residues 321–342 traverse the membrane as a helical segment; sequence REMVMLLVFICVAMAIFSALSQ. Residues 343 to 360 lie on the Extracellular side of the membrane; the sequence is LLEHGLDLETSNKDFTSI. The helical intramembrane region spans 361–372; it reads PAACWWVIISMT. The Selectivity filter signature appears at 373-378; that stretch reads TVGYGD. Residues 373-380 lie within the membrane without spanning it; sequence TVGYGDMY. Topologically, residues 381–387 are extracellular; sequence PITVPGR. Residues 388–416 form a helical membrane-spanning segment; that stretch reads ILGGVCVVSGIVLLALPITFIYHSFVQCY. Residues 417-436 lie on the Cytoplasmic side of the membrane; it reads HELKFRSARYSRSLSTEFLN.

The protein belongs to the potassium channel family. G (TC 1.A.1.2) subfamily. Kv6.3/KCNG3 sub-subfamily. In terms of assembly, heterotetramer with KCNB1. Does not form homomultimers. Expressed in the brain, liver, testis, small intestine, colon, thymus and adrenal gland.

It is found in the cell membrane. Its subcellular location is the cytoplasm. Its function is as follows. Regulatory subunit of the voltage-gated potassium (Kv) channel which, when coassembled with KCNB1, modulates the kinetics parameters of the heterotetrameric channel namely the inactivation and deactivation rate. Potassium channel subunit that does not form functional channels by itself. Reduces the deactivation rate. Moderately accelerates activation. The polypeptide is Voltage-gated potassium channel regulatory subunit KCNG3 (Homo sapiens (Human)).